The following is a 350-amino-acid chain: MPVLHNRISNDELKAKMLAESEPRTTISFYKYFTIASPQQTRDALYQVFTALDVFGRVYLAHEGINAQISVPQSKVETFRQQLYTFDPALDGVRLNIALEDDGKSFWVLRMKVRDRIVADGIDDPSFDASNVGDYLKAADVNAMLDDPDAVFIDMRNHYEYEVGHFENALEIPADTFREQLPKAVEMLREHADKKIVMYCTGGIRCEKASAWMKHNGFNKVWHIEGGIIEYARRAREQGLPVRFIGKNFVFDERMGERISDEVIAHCHQCGVSCDSHTNCKNDGCHLLFIQCPQCASKFNGCCSEQCCEELALPEEEQRRRRAGRENGNKIFNKSRGRLNSKLSIPDPAE.

The region spanning 146-240 is the Rhodanese domain; it reads DDPDAVFIDM…YARRAREQGL (95 aa). C200 functions as the Cysteine persulfide intermediate in the catalytic mechanism. The segment covering 319–328 has biased composition (basic and acidic residues); that stretch reads RRRRAGRENG. Positions 319–350 are disordered; it reads RRRRAGRENGNKIFNKSRGRLNSKLSIPDPAE.

The protein belongs to the TrhO family.

The enzyme catalyses uridine(34) in tRNA + AH2 + O2 = 5-hydroxyuridine(34) in tRNA + A + H2O. Its function is as follows. Catalyzes oxygen-dependent 5-hydroxyuridine (ho5U) modification at position 34 in tRNAs. The polypeptide is tRNA uridine(34) hydroxylase (Salmonella typhi).